The following is a 157-amino-acid chain: ABA-responsive protein ABR17 (157 aa).

This sequence belongs to the BetVI family.

This is ABA-responsive protein ABR17 from Pisum sativum (Garden pea).